The chain runs to 161 residues: Putative allophycocyanin subunit alpha 2 (161 aa).

Asn-71 is subject to N4-methylasparagine. Residue Cys-81 coordinates (2R,3E)-phycocyanobilin.

It belongs to the phycobiliprotein family. As to quaternary structure, heterohexamer of two alpha chains, one alpha-B chain and three beta chains. In terms of processing, contains one covalently linked phycocyanobilin chromophore. The chromophore is added by phycocyanobilin lyase CpcS 1.

The protein resides in the cellular thylakoid membrane. In terms of biological role, light-harvesting photosynthetic bile pigment-protein from the phycobiliprotein complex. Allophycocyanin has a maximum absorption at approximately 650 to 653 nanometers. The chain is Putative allophycocyanin subunit alpha 2 (apcA2) from Nostoc sp. (strain PCC 7120 / SAG 25.82 / UTEX 2576).